A 228-amino-acid chain; its full sequence is Ribonuclease HII (228 aa).

An RNase H type-2 domain is found at 1 to 210 (MKIAGIDEAG…LKKIAEKVES (210 aa)). The a divalent metal cation site is built by D7, E8, and D105.

The protein belongs to the RNase HII family. In terms of assembly, monomer. Mn(2+) serves as cofactor. Requires Mg(2+) as cofactor.

It localises to the cytoplasm. It carries out the reaction Endonucleolytic cleavage to 5'-phosphomonoester.. Functionally, endonuclease that specifically degrades the RNA of RNA-DNA hybrids. In Thermococcus kodakarensis (strain ATCC BAA-918 / JCM 12380 / KOD1) (Pyrococcus kodakaraensis (strain KOD1)), this protein is Ribonuclease HII (rnhB).